A 297-amino-acid chain; its full sequence is N-acetylmuramic acid 6-phosphate etherase (297 aa).

Residues Ile55 to Lys218 enclose the SIS domain. Residue Glu83 is the Proton donor of the active site. Residue Glu114 is part of the active site.

The protein belongs to the GCKR-like family. MurNAc-6-P etherase subfamily. Homodimer.

It carries out the reaction N-acetyl-D-muramate 6-phosphate + H2O = N-acetyl-D-glucosamine 6-phosphate + (R)-lactate. It participates in amino-sugar metabolism; N-acetylmuramate degradation. Its function is as follows. Specifically catalyzes the cleavage of the D-lactyl ether substituent of MurNAc 6-phosphate, producing GlcNAc 6-phosphate and D-lactate. The sequence is that of N-acetylmuramic acid 6-phosphate etherase from Oenococcus oeni (strain ATCC BAA-331 / PSU-1).